A 480-amino-acid chain; its full sequence is Ciliated left-right organizer protein containing ZP-N domains homolog (480 aa).

The N-terminal stretch at M1–S23 is a signal peptide.

In terms of tissue distribution, expressed specifically by cells of the ciliated left-right organizer.

It localises to the secreted. In Xenopus tropicalis (Western clawed frog), this protein is Ciliated left-right organizer protein containing ZP-N domains homolog.